A 324-amino-acid chain; its full sequence is DNA repair and recombination protein RadA (324 aa).

107 to 114 (GEFGSGKS) lines the ATP pocket.

It belongs to the eukaryotic RecA-like protein family.

Involved in DNA repair and in homologous recombination. Binds and assemble on single-stranded DNA to form a nucleoprotein filament. Hydrolyzes ATP in a ssDNA-dependent manner and promotes DNA strand exchange between homologous DNA molecules. The sequence is that of DNA repair and recombination protein RadA from Methanoculleus marisnigri (strain ATCC 35101 / DSM 1498 / JR1).